The sequence spans 596 residues: (E)-beta-ocimene synthase, chloroplastic (596 aa).

Residues 1 to 35 constitute a chloroplast transit peptide; it reads MAITHYQMASFQSSFHFCMLRKTLRQKSSLHFAKR. (2E)-geranyl diphosphate-binding residues include Arg307, Asp344, Asp348, Arg485, and Asn488. The Mg(2+) site is built by Asp344 and Asp348. Positions 344–348 match the DDXXD motif motif; it reads DDIYD. Mg(2+)-binding residues include Asn488, Ala492, and Glu496.

The protein belongs to the terpene synthase family. Tpsb subfamily. The cofactor is Mg(2+). It depends on Mn(2+) as a cofactor. Highly expressed in leaves, stems and disk florets. Detected in roots.

Its subcellular location is the plastid. It localises to the chloroplast. It catalyses the reaction (2E)-geranyl diphosphate = (E)-beta-ocimene + diphosphate. It functions in the pathway secondary metabolite biosynthesis; terpenoid biosynthesis. Monoterpene synthase involved in the biosynthesis of (E)-beta-ocimene as the major product and trace amounts of (Z)-beta-ocimene. Can only accept geranyl diphosphate as substrate. This chain is (E)-beta-ocimene synthase, chloroplastic, found in Matricaria chamomilla var. recutita (German chamomile).